A 78-amino-acid chain; its full sequence is MSPLAHLLALPVRAYRLIFSPWVGYNCRYQPTCSAYALEALQKHGGLIGAWLTLRRILRCHPWGKCGYDPVPERTRKP.

The protein belongs to the UPF0161 family.

The protein resides in the cell inner membrane. Could be involved in insertion of integral membrane proteins into the membrane. The protein is Putative membrane protein insertion efficiency factor of Roseobacter denitrificans (strain ATCC 33942 / OCh 114) (Erythrobacter sp. (strain OCh 114)).